Reading from the N-terminus, the 297-residue chain is Acetyl-coenzyme A carboxylase carboxyl transferase subunit beta (297 aa).

The disordered stretch occupies residues 1–23; sequence MSWIERILGRTSSSSSSSKSKVP. The CoA carboxyltransferase N-terminal domain maps to 26 to 295; the sequence is VWTKCTSCEQ…PFKTAELIVE (270 aa). Residues Cys30, Cys33, Cys49, and Cys52 each coordinate Zn(2+). A C4-type zinc finger spans residues 30–52; it reads CTSCEQVLYSEELKRNMHVCPKC.

Belongs to the AccD/PCCB family. As to quaternary structure, acetyl-CoA carboxylase is a heterohexamer composed of biotin carboxyl carrier protein (AccB), biotin carboxylase (AccC) and two subunits each of ACCase subunit alpha (AccA) and ACCase subunit beta (AccD). Zn(2+) serves as cofactor.

Its subcellular location is the cytoplasm. It catalyses the reaction N(6)-carboxybiotinyl-L-lysyl-[protein] + acetyl-CoA = N(6)-biotinyl-L-lysyl-[protein] + malonyl-CoA. It participates in lipid metabolism; malonyl-CoA biosynthesis; malonyl-CoA from acetyl-CoA: step 1/1. Functionally, component of the acetyl coenzyme A carboxylase (ACC) complex. Biotin carboxylase (BC) catalyzes the carboxylation of biotin on its carrier protein (BCCP) and then the CO(2) group is transferred by the transcarboxylase to acetyl-CoA to form malonyl-CoA. This Actinobacillus pleuropneumoniae serotype 7 (strain AP76) protein is Acetyl-coenzyme A carboxylase carboxyl transferase subunit beta.